The primary structure comprises 284 residues: Pantothenate synthetase (284 aa).

Residue 30–37 (MGNLHEGH) coordinates ATP. The active-site Proton donor is His37. A (R)-pantoate-binding site is contributed by Gln61. Gln61 contacts beta-alanine. 149-152 (GEKD) is a binding site for ATP. Gln155 contributes to the (R)-pantoate binding site. Residues Val178 and 186–189 (LSSR) each bind ATP.

It belongs to the pantothenate synthetase family. As to quaternary structure, homodimer.

Its subcellular location is the cytoplasm. The catalysed reaction is (R)-pantoate + beta-alanine + ATP = (R)-pantothenate + AMP + diphosphate + H(+). Its pathway is cofactor biosynthesis; (R)-pantothenate biosynthesis; (R)-pantothenate from (R)-pantoate and beta-alanine: step 1/1. In terms of biological role, catalyzes the condensation of pantoate with beta-alanine in an ATP-dependent reaction via a pantoyl-adenylate intermediate. The polypeptide is Pantothenate synthetase (Yersinia enterocolitica serotype O:8 / biotype 1B (strain NCTC 13174 / 8081)).